The following is a 353-amino-acid chain: Inactive ubiquitin thioesterase OTULINL (353 aa).

The required for membrane binding stretch occupies residues 1–80 (MEAPRSAPRE…KWWIGYLQRK (80 aa)). The 229-residue stretch at 125-353 (KCVRAVKRDN…NGHHYHIPVF (229 aa)) folds into the OTU domain.

The protein belongs to the peptidase C65 family. Otulin subfamily. As to quaternary structure, does not bind ubiquitin or ubiquitin-like proteins.

The protein resides in the cytoplasm. It localises to the endoplasmic reticulum membrane. Its subcellular location is the nucleus envelope. Lacks deubiquitinase activity. The sequence is that of Inactive ubiquitin thioesterase OTULINL from Mus musculus (Mouse).